Consider the following 300-residue polypeptide: Ribonuclease HIII (300 aa).

Residues 83 to 300 (IPIIGSDEVG…THKAQALLTK (218 aa)) enclose the RNase H type-2 domain. A divalent metal cation-binding residues include aspartate 89, glutamate 90, and aspartate 194.

This sequence belongs to the RNase HII family. RnhC subfamily. It depends on Mn(2+) as a cofactor. Mg(2+) is required as a cofactor.

It is found in the cytoplasm. The enzyme catalyses Endonucleolytic cleavage to 5'-phosphomonoester.. Endonuclease that specifically degrades the RNA of RNA-DNA hybrids. The sequence is that of Ribonuclease HIII from Streptococcus pyogenes serotype M3 (strain ATCC BAA-595 / MGAS315).